The primary structure comprises 585 residues: Type IV pilus assembly ATPase TfpB (585 aa).

346–351 (GSGKTT) contacts ATP. Positions 476, 479, 511, and 514 each coordinate Zn(2+).

Belongs to the GSP E family.

It localises to the cytoplasm. Its function is as follows. ATPase component of the type IV pilus (T4P). Acts as a molecular motor to provide the energy that is required for biogenesis of the pilus and the extrusion of substrates generated in the cytoplasm. TfpB is required for optimal T4P extension and, consequently, efficient natural transformation. May play a role in initiating T4P extension. This is Type IV pilus assembly ATPase TfpB from Acinetobacter baylyi (strain ATCC 33305 / BD413 / ADP1).